Here is a 260-residue protein sequence, read N- to C-terminus: Large ribosomal subunit protein uL2 (260 aa).

The segment at M1–K24 is disordered.

The protein belongs to the universal ribosomal protein uL2 family.

It is found in the cytoplasm. The chain is Large ribosomal subunit protein uL2 (RPL8) from Solanum lycopersicum (Tomato).